A 112-amino-acid polypeptide reads, in one-letter code: Serum amyloid A protein (112 aa).

Glutamine 1 is subject to Pyrrolidone carboxylic acid. Over residues 75–86 (MTRDQVREDTKA) the composition is skewed to basic and acidic residues. The segment at 75 to 112 (MTRDQVREDTKADQFANEWGRSGKDPNHFRPPGLPDKY) is disordered.

This sequence belongs to the SAA family. In terms of tissue distribution, expressed by the liver; secreted in plasma.

Its subcellular location is the secreted. In terms of biological role, major acute phase reactant. Apolipoprotein of the HDL complex. The sequence is that of Serum amyloid A protein (SAA1) from Ovis aries (Sheep).